Reading from the N-terminus, the 156-residue chain is Inorganic triphosphatase (156 aa).

Residues 2–148 form the CYTH domain; the sequence is GKEIEKKFIV…PRYLNSNLVK (147 aa). The active-site Proton acceptor is Y29.

As to quaternary structure, homodimer.

The catalysed reaction is triphosphate + H2O = phosphate + diphosphate. The enzyme catalyses ATP + H2O = ADP + phosphate + H(+). Functionally, involved in the hydrolysis of the beta-gamma-phosphoanhydride linkage of triphosphate-containing substrates (inorganic or nucleoside-linked). Catalyzes vigorously the hydrolysis of inorganic triphosphate (PPPi), however it can also catalyze the hydrolysis of ATP to ADP and phosphate. It can use ribonucleotides such as GTP, CTP, or UTP and deoxynucleotides such as dATP, dGTP, dCTP, and dTTP. This Acetivibrio thermocellus (strain ATCC 27405 / DSM 1237 / JCM 9322 / NBRC 103400 / NCIMB 10682 / NRRL B-4536 / VPI 7372) (Clostridium thermocellum) protein is Inorganic triphosphatase.